A 95-amino-acid chain; its full sequence is Large ribosomal subunit protein uL23cz/uL23cy (95 aa).

The protein belongs to the universal ribosomal protein uL23 family. In terms of assembly, part of the 50S ribosomal subunit.

The protein resides in the plastid. The protein localises to the chloroplast. Binds to 23S rRNA. The protein is Large ribosomal subunit protein uL23cz/uL23cy (rpl23-A) of Amborella trichopoda.